The primary structure comprises 296 residues: m7GpppN-mRNA hydrolase NUDT17 (296 aa).

The region spanning 90-236 (GRGVDVGVAV…DSGSPCGPLP (147 aa)) is the Nudix hydrolase domain. The Nudix box motif lies at 129-150 (GHVELGEQLLEAGLRELQEETG). Glutamate 144 and glutamate 148 together coordinate Mg(2+).

The protein belongs to the Nudix hydrolase family. It depends on Mg(2+) as a cofactor. The cofactor is Mn(2+).

The enzyme catalyses a 5'-end (N(7)-methyl 5'-triphosphoguanosine)-ribonucleoside in mRNA + H2O = N(7)-methyl-GDP + a 5'-end phospho-ribonucleoside in mRNA + 2 H(+). Its function is as follows. Acts as a decapping enzyme capable of hydrolyzing monomethylated capped RNAs (in vitro). Hydrolyzes monomethylated capped RNA after alpha and beta phosphates to form N(7)-methyl-GDP. Shows low activity towards unmethylated capped RNA. The sequence is that of m7GpppN-mRNA hydrolase NUDT17 (nudt17) from Xenopus laevis (African clawed frog).